Consider the following 168-residue polypeptide: Cyclin-dependent kinase 4 inhibitor C (168 aa).

ANK repeat units follow at residues 4–33 (PWGN…NVNA), 37–65 (FGRT…NPNL), 69–98 (TGFA…DVNI), 102–132 (EGNL…NVGH), and 136–165 (KGDT…GGAT).

This sequence belongs to the CDKN2 cyclin-dependent kinase inhibitor family. In terms of assembly, heterodimer of p18 with CDK6.

In terms of biological role, interacts strongly with CDK6, weakly with CDK4. Inhibits cell growth and proliferation with a correlated dependence on endogenous retinoblastoma protein RB. This Mus musculus (Mouse) protein is Cyclin-dependent kinase 4 inhibitor C (Cdkn2c).